The chain runs to 134 residues: uncharacterized protein (134 aa).

The helical transmembrane segment at 110 to 130 threads the bilayer; it reads SLGVLTDILFLVLYSLLIHLS.

It is found in the membrane. This is an uncharacterized protein from Saccharomyces cerevisiae (strain ATCC 204508 / S288c) (Baker's yeast).